A 205-amino-acid chain; its full sequence is Recombination protein RecR (205 aa).

The segment at 59-74 (CARCNTFCEGGLCDIC) adopts a C4-type zinc-finger fold. Positions 82 to 177 (RRLMVVHMPA…KVSRLSQGIP (96 aa)) constitute a Toprim domain.

Belongs to the RecR family.

May play a role in DNA repair. It seems to be involved in an RecBC-independent recombinational process of DNA repair. It may act with RecF and RecO. In Neisseria gonorrhoeae (strain ATCC 700825 / FA 1090), this protein is Recombination protein RecR.